A 317-amino-acid chain; its full sequence is Zinc finger protein 771 (317 aa).

A Glycyl lysine isopeptide (Lys-Gly) (interchain with G-Cter in SUMO2) cross-link involves residue K33. C2H2-type zinc fingers lie at residues 63-85, 91-113, 119-141, 147-169, 175-197, 203-225, 231-253, and 259-281; these read HACP…ARTH, FACT…GRTH, YQCP…RRRH, YACA…LRVH, YACP…RRTH, YACA…RRVH, HRCA…ARTH, and YPCT…RRAH.

Belongs to the krueppel C2H2-type zinc-finger protein family.

Its subcellular location is the nucleus. Its function is as follows. May be involved in transcriptional regulation. This is Zinc finger protein 771 (Znf771) from Mus musculus (Mouse).